Consider the following 133-residue polypeptide: p53 and DNA damage-regulated protein 1 (133 aa).

It belongs to the prefoldin subunit beta family. As to quaternary structure, component of the PAQosome complex which is responsible for the biogenesis of several protein complexes and which consists of R2TP complex members RUVBL1, RUVBL2, RPAP3 and PIH1D1, URI complex members PFDN2, PFDN6, PDRG1, UXT and URI1 as well as ASDURF, POLR2E and DNAAF10/WDR92.

It is found in the cytoplasm. May play a role in chaperone-mediated protein folding. This Bos taurus (Bovine) protein is p53 and DNA damage-regulated protein 1 (PDRG1).